Reading from the N-terminus, the 1323-residue chain is MLVYYGGSALSVQSKKKILELTVSGVSDLNAVYFYLIYTKSNSSLNCESLRPILSDLQESEFKPDGTTMVYVFPRPGTISPWSSKATNIANVCGYKDVIRIERGIAYSVVFKDDISEEMLKSALNHLYDRMTEALRFKLPEEDEVFDKHEPAPLVRIELNCGQGGDKQAATERLNHANKKFGLALAPDEIDYLVECYTSEPSLKSREPTDVELFMFGQVNSEHCRHKIFNADWTIDGEKKDYSLFKMIRNTHLKNPQYTISAYSDNAAVFEGNSGTLFAPVNGIWSMKDEPVEFLGKVETHNHPTAVSPFPGAATGSGGEIRDEGAVGQGSLSKAGLAGYSVSDLNIPGYKQPWELDVGKPYHIATSLDIMLEAPIGSSAFNNEFGRPCINGYFRTFCMEVPRGDGTLEIRGYHKPIMAAGGIGRIRKQHAFKKSIAPGSPIIVLGGPALLVGLGGGAASSMNAGEGSEELDFASVQRGNPEMQRRAQMVIDACTTMDENIIQSIHDVGAGGVSNALPELVHDAGLGARFELRDIPCIEPSMSPMQIWCCESQERYVLSVKSEDLDTFKSICERERCPYGVVGYSTVEQRLILTDRLYNTTPIDLPMEVLFGKPPKMSRVAETQTIPLSKFDSSLKSYLAPSSDPILDAVERVLRMPAVASKSFLITIGDRSVTGLIARDQMVGPWQVPVADVGVTVTSYGKGINTGEALAMGEKPISALVSAAASARMAVAECIMNLVAASIPALDRIRLSANWMAAPSHPGEGAKLYEAVQAIGLELCPSLGISIPVGKDSMSMSMKWNEDGREKSVTAPLSLIITGFSPVDDLYSIWTPQLRKVEDIGSTSLIFIDLANGKQRLGGSILAQSYKQLGDEVPDLDNLDTFKNFINVITQLHKTNYIQAYHDKSDGGLFVTLSEMAFAGHVGIECELDSLSSDNIAALFNEELGAVIQVCDRDIAKVLELFAANGLSTCVHRIGKVLSGQAQTISFSRSGKIIFKSTRSKLHGIWHETSYKMQEIRDNPECARQEMENIADNNDPGLGYHLTFDPNVSVTADLALTSRPKVAILREQGVNGYLEMAYAFYASGFTAVDVHMTDILSGRVHLDDFVGIAACGGFSYGDVLGSGNGWATSILLHEDARNEFYRFFNERKDTFGLGICNGCQLFSRLKSLIPGAKSWPMFTFNESAQYEGRAVMLKIDETSGSKSIFTESMAGSSLPVVVAHGEGRAVFDSESDYEQFKKEGLDLIYYVNNYNERTSRYPFNPNGSRDAIAGVRSPCGRFLAMMPHPERVVLKVANSYYPHSKASEWGVHGPWIRLFQSARKWVG.

Residues 312-323, 391-393, and A691 each bind ATP; these read GAATGSGGEIRD and NGY. Mg(2+)-binding residues include D692, E733, N737, and D903. An ATP-binding site is contributed by S905. Residues 1062–1306 form the Glutamine amidotransferase type-1 domain; sequence VAILREQGVN…YPHSKASEWG (245 aa). The active-site Nucleophile is the C1156. Active-site residues include H1284 and E1286.

The protein in the N-terminal section; belongs to the FGAMS family.

It localises to the cytoplasm. It catalyses the reaction N(2)-formyl-N(1)-(5-phospho-beta-D-ribosyl)glycinamide + L-glutamine + ATP + H2O = 2-formamido-N(1)-(5-O-phospho-beta-D-ribosyl)acetamidine + L-glutamate + ADP + phosphate + H(+). It participates in purine metabolism; IMP biosynthesis via de novo pathway; 5-amino-1-(5-phospho-D-ribosyl)imidazole from N(2)-formyl-N(1)-(5-phospho-D-ribosyl)glycinamide: step 1/2. Functionally, phosphoribosylformylglycinamidine synthase involved in the purines biosynthetic pathway. Catalyzes the ATP-dependent conversion of formylglycinamide ribonucleotide (FGAR) and glutamine to yield formylglycinamidine ribonucleotide (FGAM) and glutamate. The chain is Phosphoribosylformylglycinamidine synthase (ade3) from Schizosaccharomyces pombe (strain 972 / ATCC 24843) (Fission yeast).